A 200-amino-acid polypeptide reads, in one-letter code: Imidazoleglycerol-phosphate dehydratase (200 aa).

Belongs to the imidazoleglycerol-phosphate dehydratase family.

The protein localises to the cytoplasm. It catalyses the reaction D-erythro-1-(imidazol-4-yl)glycerol 3-phosphate = 3-(imidazol-4-yl)-2-oxopropyl phosphate + H2O. It functions in the pathway amino-acid biosynthesis; L-histidine biosynthesis; L-histidine from 5-phospho-alpha-D-ribose 1-diphosphate: step 6/9. This chain is Imidazoleglycerol-phosphate dehydratase, found in Chlorobium phaeobacteroides (strain BS1).